Here is a 190-residue protein sequence, read N- to C-terminus: Nucleoside triphosphate pyrophosphatase (190 aa).

Catalysis depends on Asp-69, which acts as the Proton acceptor.

This sequence belongs to the Maf family. A divalent metal cation is required as a cofactor.

The protein resides in the cytoplasm. It carries out the reaction a ribonucleoside 5'-triphosphate + H2O = a ribonucleoside 5'-phosphate + diphosphate + H(+). The catalysed reaction is a 2'-deoxyribonucleoside 5'-triphosphate + H2O = a 2'-deoxyribonucleoside 5'-phosphate + diphosphate + H(+). Nucleoside triphosphate pyrophosphatase. May have a dual role in cell division arrest and in preventing the incorporation of modified nucleotides into cellular nucleic acids. The sequence is that of Nucleoside triphosphate pyrophosphatase from Helicobacter pylori (strain Shi470).